Here is a 105-residue protein sequence, read N- to C-terminus: Replication initiation control protein YabA (105 aa).

4 residues coordinate Zn(2+): H79, C81, C95, and C98.

It belongs to the YabA family. Homotetramer. Interacts with both DnaA and DnaN, acting as a bridge between these two proteins. Zn(2+) is required as a cofactor.

It localises to the cytoplasm. The protein localises to the nucleoid. In terms of biological role, involved in control of chromosome replication initiation. Inhibits the cooperative binding of DnaA to the oriC region, thus negatively regulating initiation of chromosome replication. Inhibits the ability of DnaA-ATP to form a helix on DNA; does not disassemble preformed DnaA-DNA helices. Decreases the residence time of DnaA on the chromosome at its binding sites (oriC, replication forks and promoter-binding sites). Tethers DnaA to the replication machinery via the DNA polymerase beta sliding clamp subunit (dnaN). Associates with oriC and other DnaA targets on the chromosome in a DnaA-dependent manner. This chain is Replication initiation control protein YabA, found in Streptococcus suis (strain 98HAH33).